The following is a 303-amino-acid chain: ATP-dependent (S)-NAD(P)H-hydrate dehydratase (303 aa).

A YjeF C-terminal domain is found at 12 to 299 (QQQLVCSVIP…AEVRTAFSML (288 aa)). Residues Gly-106 and 158-164 (NAVELDR) contribute to the (6S)-NADPHX site. Residues 194–198 (KGSED) and 213–222 (GSPRRCGGQG) contribute to the ATP site. Asp-223 is a binding site for (6S)-NADPHX.

This sequence belongs to the NnrD/CARKD family. Mg(2+) is required as a cofactor.

The catalysed reaction is (6S)-NADHX + ATP = ADP + phosphate + NADH + H(+). It carries out the reaction (6S)-NADPHX + ATP = ADP + phosphate + NADPH + H(+). In terms of biological role, catalyzes the dehydration of the S-form of NAD(P)HX at the expense of ATP, which is converted to ADP. Together with NAD(P)HX epimerase, which catalyzes the epimerization of the S- and R-forms, the enzyme allows the repair of both epimers of NAD(P)HX, a damaged form of NAD(P)H that is a result of enzymatic or heat-dependent hydration. The chain is ATP-dependent (S)-NAD(P)H-hydrate dehydratase from Ixodes scapularis (Black-legged tick).